A 220-amino-acid polypeptide reads, in one-letter code: UPF0319 protein YccT (220 aa).

An N-terminal signal peptide occupies residues 1-20 (MKTGALTTFLALCLPVTVFA).

The protein belongs to the UPF0319 family.

This Salmonella dublin (strain CT_02021853) protein is UPF0319 protein YccT.